An 800-amino-acid chain; its full sequence is uncharacterized protein (800 aa).

Positions methionine 1 to alanine 21 are cleaved as a signal peptide. A compositionally biased stretch (polar residues) spans serine 63–isoleucine 72. Disordered stretches follow at residues serine 63–threonine 470, threonine 602–serine 670, and serine 710–serine 776. 4 stretches are compositionally biased toward low complexity: residues threonine 73–serine 314, serine 321–serine 368, serine 375–proline 444, and threonine 451–threonine 470. A compositionally biased stretch (low complexity) spans serine 710–threonine 720. Polar residues predominate over residues glutamate 721–lysine 734. The span at threonine 735–serine 776 shows a compositional bias: low complexity.

It is found in the secreted. The protein resides in the cell surface. This is an uncharacterized protein from Schizosaccharomyces pombe (strain 972 / ATCC 24843) (Fission yeast).